The primary structure comprises 193 residues: Xanthine phosphoribosyltransferase (193 aa).

2 residues coordinate xanthine: leucine 20 and threonine 27. 128–132 (ANGQA) lines the 5-phospho-alpha-D-ribose 1-diphosphate pocket. Lysine 156 lines the xanthine pocket.

Belongs to the purine/pyrimidine phosphoribosyltransferase family. Xpt subfamily. As to quaternary structure, homodimer.

The protein localises to the cytoplasm. The catalysed reaction is XMP + diphosphate = xanthine + 5-phospho-alpha-D-ribose 1-diphosphate. It participates in purine metabolism; XMP biosynthesis via salvage pathway; XMP from xanthine: step 1/1. Functionally, converts the preformed base xanthine, a product of nucleic acid breakdown, to xanthosine 5'-monophosphate (XMP), so it can be reused for RNA or DNA synthesis. This is Xanthine phosphoribosyltransferase from Streptococcus pyogenes serotype M49 (strain NZ131).